The primary structure comprises 708 residues: Homeobox-leucine zipper protein HDG10 (708 aa).

Positions 1–24 (MDSSHNDSSSDEEGIDSNNRRHHS) are disordered. The homeobox DNA-binding region spans 16 to 75 (DSNNRRHHSNHQVQRLEAFFHECPHPDDSQRRQLGNELNLKHKQIKFWFQNRRTQARIHN). The stretch at 119–141 (LCNLQKLRTKNVILKTEYERLSS) forms a coiled coil. The interval 162–188 (GPSTYGSTSNNRPASYGSSSNHLPQQS) is disordered. Residues 165-188 (TYGSTSNNRPASYGSSSNHLPQQS) are compositionally biased toward polar residues. Residues 218 to 456 (SQLEKNRMFE…LQRMCERLSL (239 aa)) form the START domain.

The protein belongs to the HD-ZIP homeobox family. Class IV subfamily. Interacts with ANT, BBM and AIL1. Expressed in exclusively in anthers with highest levels in the tapetum and pollen grains.

The protein resides in the nucleus. Its function is as follows. Probable transcription factor. The sequence is that of Homeobox-leucine zipper protein HDG10 from Arabidopsis thaliana (Mouse-ear cress).